The primary structure comprises 449 residues: Maltose-6'-phosphate glucosidase (449 aa).

NAD(+) is bound at residue 6-72 (FSIVIAGGGS…PDIEFAATTD (67 aa)). Residues R95 and N149 each contribute to the substrate site. C171 serves as a coordination point for Mn(2+). D172 serves as the catalytic Proton donor. A Mn(2+)-binding site is contributed by H202. Residue Y265 is the Proton acceptor of the active site. Residue R285 coordinates substrate.

It belongs to the glycosyl hydrolase 4 family. As to quaternary structure, homotetramer. The cofactor is Mn(2+). Fe(2+) is required as a cofactor. It depends on Co(2+) as a cofactor. Ni(2+) serves as cofactor. Requires NAD(+) as cofactor.

It catalyses the reaction alpha-maltose 6'-phosphate + H2O = D-glucose 6-phosphate + D-glucose. Cellobiose-6'-phosphate and 6-phospho-beta-D-glucopyranoside are not substrates but competitive inhibitors of GlvA. Its function is as follows. Hydrolyzes maltose-6'-phosphate and trehalose-6'-phosphate. Is involved in the catabolism of alpha-glycosides accumulated via a phosphoenolpyruvate-dependent maltose phosphotransferase system (PEP-PTS). Is also able to significantly catalyze the hydrolysis of both 6-phospho-alpha- and 6-phospho-beta-glucosides containing activated leaving groups such as p-nitrophenol and does so with retention and inversion, respectively, of the substrate anomeric configuration. The polypeptide is Maltose-6'-phosphate glucosidase (glvA) (Bacillus subtilis (strain 168)).